Here is a 462-residue protein sequence, read N- to C-terminus: Tubby-like F-box protein 7 (462 aa).

The 56-residue stretch at 54 to 109 (SKWAGLPPELLRDVMKRLEEDDSNWPSRKDVVACASVCTTWRDMCKDIVRNPEFCG) folds into the F-box domain. Disordered regions lie at residues 317-338 (FSEFGGGALQGQEQEQDGDDVN) and 383-418 (QPSSGAASEPSQAGQAAQQQTQPSQPSSSSSSSSSN). The segment covering 383 to 417 (QPSSGAASEPSQAGQAAQQQTQPSQPSSSSSSSSS) has biased composition (low complexity).

It belongs to the TUB family. In terms of tissue distribution, ubiquitous.

This chain is Tubby-like F-box protein 7 (TULP7), found in Oryza sativa subsp. japonica (Rice).